Reading from the N-terminus, the 274-residue chain is Large ribosomal subunit protein uL2cz/uL2cy (274 aa).

Disordered stretches follow at residues 1 to 25 (MAIH…VKSN) and 223 to 274 (MNPV…RRTK).

The protein belongs to the universal ribosomal protein uL2 family. As to quaternary structure, part of the 50S ribosomal subunit.

The protein localises to the plastid. It is found in the chloroplast. The chain is Large ribosomal subunit protein uL2cz/uL2cy (rpl2-A) from Citrus sinensis (Sweet orange).